We begin with the raw amino-acid sequence, 105 residues long: UPF0145 protein lpg0197 (105 aa).

The protein belongs to the UPF0145 family.

The polypeptide is UPF0145 protein lpg0197 (Legionella pneumophila subsp. pneumophila (strain Philadelphia 1 / ATCC 33152 / DSM 7513)).